The sequence spans 609 residues: UvrABC system protein C (609 aa).

The region spanning 16 to 94 (SSAGVYRMYD…IKQYMPKYNV (79 aa)) is the GIY-YIG domain. A UVR domain is found at 203–238 (QQVISTLVAKMEQAAQQQEYEQAARFRDQIMALRKV).

It belongs to the UvrC family. As to quaternary structure, interacts with UvrB in an incision complex.

The protein localises to the cytoplasm. Its function is as follows. The UvrABC repair system catalyzes the recognition and processing of DNA lesions. UvrC both incises the 5' and 3' sides of the lesion. The N-terminal half is responsible for the 3' incision and the C-terminal half is responsible for the 5' incision. This Shewanella putrefaciens (strain CN-32 / ATCC BAA-453) protein is UvrABC system protein C.